A 421-amino-acid polypeptide reads, in one-letter code: Cell division protein FtsZ (421 aa).

GTP is bound by residues 26 to 30 (GGGGN), 132 to 134 (GTG), Glu-163, Arg-167, and Asn-211.

Belongs to the FtsZ family. As to quaternary structure, homodimer. Polymerizes to form a dynamic ring structure in a strictly GTP-dependent manner. Interacts directly with several other division proteins.

Its subcellular location is the cytoplasm. Its function is as follows. Essential cell division protein that forms a contractile ring structure (Z ring) at the future cell division site. The regulation of the ring assembly controls the timing and the location of cell division. One of the functions of the FtsZ ring is to recruit other cell division proteins to the septum to produce a new cell wall between the dividing cells. Binds GTP and shows GTPase activity. The protein is Cell division protein FtsZ of Haemophilus influenzae (strain ATCC 51907 / DSM 11121 / KW20 / Rd).